The primary structure comprises 61 residues: Large ribosomal subunit protein uL30 (61 aa).

It belongs to the universal ribosomal protein uL30 family. Part of the 50S ribosomal subunit.

This chain is Large ribosomal subunit protein uL30, found in Lacticaseibacillus casei (strain BL23) (Lactobacillus casei).